The sequence spans 414 residues: Protein ABHD18 (414 aa).

Residues 1–24 form the signal peptide; the sequence is MGVSKLDILYRRLLLTKLFIRGWG. N-linked (GlcNAc...) asparagine glycans are attached at residues asparagine 282 and asparagine 307.

It belongs to the AB hydrolase superfamily.

Its subcellular location is the secreted. The chain is Protein ABHD18 from Homo sapiens (Human).